We begin with the raw amino-acid sequence, 659 residues long: WD repeat-containing protein 48 homolog (659 aa).

WD repeat units lie at residues 27–66, 73–112, 115–154, 166–205, 208–247, 250–289, 292–331, and 337–376; these read RHRNGVNALQLDTINGRLYSAGRDAIIRVWNSMQNNSQEP, HHNDWVNDIVLCCGGRNLISASCDTTVKVWNAHKGFCMST, THRDYVQALAYAKDREQVASAGLDKAIFLWDINTLTALTA, GSKDSIYSLAMNPSGTVIVCGSTENTLRIWDPRTCNKIAK, GHAENVKALVVSEDGQHVISGSSDGKIKQWSIGQQRCVQT, VHSEGVWALLMTDNFSHVISGSRDKKIIMTDLRNPTNSVL, EERAPVLSLCYNYDQTGVWATTWNSDIRCWKLNPSEKLSF, and KGGAAIKKYHVLNDKRFMLTKDSEMNVAIYDVLKVKKVED. The interval 592 to 613 is disordered; it reads ASTGNSNSSQNNSQSDANSEGS. Over residues 596–610 the composition is skewed to low complexity; sequence NSNSSQNNSQSDANS.

This sequence belongs to the WD repeat WDR48 family. As to quaternary structure, catalytic component of the Usp12-46 deubiquitylase complex consisting of Usp12-46, Wdr20 and Uaf1; regulatory subunit that, together wtih Wdr20, stabilizes Usp12-46. The Usp12-46 deubiquitylase complex associates with arr/arrow; the interaction leads to deubiquitination and stabilization of arr/arrow.

In terms of biological role, regulatory component of the Usp12-46 deubiquitylase complex. activates deubiquitination by increasing the catalytic turnover without increasing the affinity of deubiquitinating enzymes for the substrate. The complex deubiquitylates the wg/wingless-signaling receptor arr/arrow, which stabilizes the receptor and increases its concentration at the cell surface; this enhances the sensitivity of cells to wg/wingless-signal stimulation. This increases the amplitude and spatial range of the signaling response to the wg/wingless morphogen gradient, facilitating the precise concentration-dependent regulation of its target genes. Together with Wdr20 and Usp12-46 required for wg/wingless-mediated signaling in the wing imaginal disc and for wg/wingless-dependent regulation of intestinal stem cell proliferation. In Aedes aegypti (Yellowfever mosquito), this protein is WD repeat-containing protein 48 homolog.